The primary structure comprises 533 residues: Protein disulfide isomerase-like 1-5 (533 aa).

Residues 1–22 (MRARRVVAAAAVLLLFAVVAVA) form the signal peptide. 2 consecutive Thioredoxin domains span residues 51 to 196 (LGGG…KDQT) and 387 to 516 (LLEG…EKLQ). Cys97 serves as the catalytic Nucleophile. Asn151 carries an N-linked (GlcNAc...) asparagine glycan. Residues Cys436 and Cys439 each act as nucleophile in the active site. A disulfide bridge connects residues Cys436 and Cys439. The Prevents secretion from ER motif lies at 530 to 533 (KDEL).

Belongs to the protein disulfide isomerase family.

The protein resides in the endoplasmic reticulum lumen. It carries out the reaction Catalyzes the rearrangement of -S-S- bonds in proteins.. Its function is as follows. Acts as a protein-folding catalyst that interacts with nascent polypeptides to catalyze the formation, isomerization, and reduction or oxidation of disulfide bonds. May play a role in storage protein biogenesis. The protein is Protein disulfide isomerase-like 1-5 (PDIL1-5) of Oryza sativa subsp. japonica (Rice).